Consider the following 142-residue polypeptide: Hemoglobin subunit alpha-C (142 aa).

Alanine 2 carries the N-acetylalanine modification. Residues 2–142 (ALNCDDKAHI…VSGLLTSKYR (141 aa)) form the Globin domain. Residue histidine 59 participates in O2 binding. Residue histidine 88 coordinates heme b.

Belongs to the globin family. In terms of assembly, heterotetramer of either two alpha-B chains or two alpha-C chains and two beta chains. The two major hemoglobins, B and C, associate upon deoxygenation to form a trimer of tetramers, BC2, that has a much lower affinity for oxygen than either component alone. As to expression, red blood cells.

In terms of biological role, the alpha-C chain is a component of adult hemoglobin C. This chain is Hemoglobin subunit alpha-C, found in Aquarana catesbeiana (American bullfrog).